The following is a 97-amino-acid chain: Ataxin-7-like protein 3B (97 aa).

The tract at residues 76-97 (SLPGDPGDGPQTELQRSPPEFQ) is disordered. Ser-92 is subject to Phosphoserine.

This sequence belongs to the SGF11 family. As to quaternary structure, interacts strongly with ENY2. Interacts weakly with USP22.

Its subcellular location is the cytoplasm. In terms of biological role, by binding to ENY2, interferes with the nuclear functions of the deubiquitinase (DUB) module of the SAGA complex which consists of ENY2, ATXN7, ATXN7L3 and the histone deubiquitinating component USP22. Affects USP22 DUB activity toward histones indirectly by changing the subcellular distribution of ENY2 and altering ENY2 availability for ATXN7L3 interaction. Regulates H2B monoubiquitination (H2Bub1) levels through cytoplasmic sequestration of ENY2 resulting in loss of nuclear ENY2-ATXN7L3 association which destabilizes ATXN7L3. Affects protein expression levels of ENY2 and ATXN7L3. The protein is Ataxin-7-like protein 3B (Atxn7l3b) of Mus musculus (Mouse).